The following is a 146-amino-acid chain: Hemoglobin subunit beta (146 aa).

The 145-residue stretch at 2-146 (HWSAEEKQLI…VAHALARKYH (145 aa)) folds into the Globin domain. Residues H63 and H92 each coordinate heme b.

It belongs to the globin family. In terms of assembly, heterotetramer of two alpha chains and two beta chains. In terms of tissue distribution, red blood cells.

In terms of biological role, involved in oxygen transport from the lung to the various peripheral tissues. In Anser indicus (Bar-headed goose), this protein is Hemoglobin subunit beta (HBB).